We begin with the raw amino-acid sequence, 357 residues long: Probable butyrate kinase 1 (357 aa).

The protein belongs to the acetokinase family.

It is found in the cytoplasm. The enzyme catalyses butanoate + ATP = butanoyl phosphate + ADP. The polypeptide is Probable butyrate kinase 1 (Caldanaerobacter subterraneus subsp. tengcongensis (strain DSM 15242 / JCM 11007 / NBRC 100824 / MB4) (Thermoanaerobacter tengcongensis)).